Here is a 349-residue protein sequence, read N- to C-terminus: Ornithine carbamoyltransferase, mitochondrial (349 aa).

Carbamoyl phosphate is bound by residues 73-76, Arg124, His151, and Gln154; that span reads STRT. Residues Asn195, Asp261, Ser265, and Met266 each coordinate L-ornithine. Cys303 acts as the Proton acceptor in catalysis. Residues 303 to 304 and Arg330 contribute to the carbamoyl phosphate site; that span reads CL.

It belongs to the aspartate/ornithine carbamoyltransferase superfamily. OTCase family. In terms of assembly, homotrimer.

Its subcellular location is the mitochondrion matrix. It catalyses the reaction carbamoyl phosphate + L-ornithine = L-citrulline + phosphate + H(+). It functions in the pathway amino-acid biosynthesis; L-arginine biosynthesis; L-arginine from L-ornithine and carbamoyl phosphate: step 1/3. This is Ornithine carbamoyltransferase, mitochondrial from Coccidioides immitis (strain RS) (Valley fever fungus).